The chain runs to 238 residues: Isoamyl acetate-hydrolyzing esterase (238 aa).

Catalysis depends on serine 12, which acts as the Nucleophile. Aspartate 187 functions as the Proton donor in the catalytic mechanism. Catalysis depends on histidine 190, which acts as the Proton acceptor.

Belongs to the 'GDSL' lipolytic enzyme family. IAH1 subfamily. In terms of assembly, homodimer.

The enzyme catalyses 3-methylbutyl acetate + H2O = 3-methylbutanol + acetate + H(+). Plays a crucial role in the hydrolysis of isoamyl acetate in sake mash. Hydrolyzes short chain esters from acetate (C2) to hexanoate (C6), showing more specificity for shorter chain exters. No activity for decanoate (C10) esters. This Saccharomyces cerevisiae (strain ATCC 204508 / S288c) (Baker's yeast) protein is Isoamyl acetate-hydrolyzing esterase.